A 110-amino-acid chain; its full sequence is Phosphoribosyl-AMP cyclohydrolase (110 aa).

Aspartate 74 is a Mg(2+) binding site. A Zn(2+)-binding site is contributed by cysteine 75. Mg(2+) is bound by residues aspartate 76 and aspartate 78. Zn(2+)-binding residues include cysteine 91 and cysteine 98.

It belongs to the PRA-CH family. As to quaternary structure, homodimer. It depends on Mg(2+) as a cofactor. The cofactor is Zn(2+).

Its subcellular location is the cytoplasm. It carries out the reaction 1-(5-phospho-beta-D-ribosyl)-5'-AMP + H2O = 1-(5-phospho-beta-D-ribosyl)-5-[(5-phospho-beta-D-ribosylamino)methylideneamino]imidazole-4-carboxamide. The protein operates within amino-acid biosynthesis; L-histidine biosynthesis; L-histidine from 5-phospho-alpha-D-ribose 1-diphosphate: step 3/9. Catalyzes the hydrolysis of the adenine ring of phosphoribosyl-AMP. The chain is Phosphoribosyl-AMP cyclohydrolase from Lacticaseibacillus casei (strain BL23) (Lactobacillus casei).